We begin with the raw amino-acid sequence, 379 residues long: NADH-rubredoxin oxidoreductase (379 aa).

2 cysteine pairs are disulfide-bonded: Cys-26-Cys-286 and Cys-137-Cys-216. Residues 33-35 (NSE), Arg-42, Ala-79, and Tyr-125 contribute to the FAD site. Asp-259 provides a ligand contact to FAD.

Belongs to the FAD-dependent oxidoreductase family. In terms of assembly, monomer. The cofactor is FAD.

It carries out the reaction 2 reduced [rubredoxin] + NAD(+) + H(+) = 2 oxidized [rubredoxin] + NADH. Its function is as follows. Catalyzes the NADH-dependent reduction of rubredoxin (Rd). NADPH is a very poor electron donor compared to NADH. Functions as an intermediate component in the electron transfer chain: NADH-&gt;NROR-&gt;Rd-&gt;FprA1/2. Also functions as an intermediate component in the electron transfer chains from NADH to revRbr and Dfx. Therefore, is a key electron carrier in an efficient multienzyme complex that can scavenge O(2) and reactive oxygen species (ROS), and thus plays an important role in the oxidative stress defense system in C.acetobutylicum, an obligate anaerobic bacterium. The sequence is that of NADH-rubredoxin oxidoreductase (nroR) from Clostridium acetobutylicum (strain ATCC 824 / DSM 792 / JCM 1419 / IAM 19013 / LMG 5710 / NBRC 13948 / NRRL B-527 / VKM B-1787 / 2291 / W).